Reading from the N-terminus, the 393-residue chain is Phosphopentomutase (393 aa).

Mn(2+) is bound by residues D13, D286, H291, D327, H328, and H339.

Belongs to the phosphopentomutase family. Mn(2+) serves as cofactor.

It localises to the cytoplasm. The catalysed reaction is 2-deoxy-alpha-D-ribose 1-phosphate = 2-deoxy-D-ribose 5-phosphate. It carries out the reaction alpha-D-ribose 1-phosphate = D-ribose 5-phosphate. It participates in carbohydrate degradation; 2-deoxy-D-ribose 1-phosphate degradation; D-glyceraldehyde 3-phosphate and acetaldehyde from 2-deoxy-alpha-D-ribose 1-phosphate: step 1/2. Isomerase that catalyzes the conversion of deoxy-ribose 1-phosphate (dRib-1-P) and ribose 1-phosphate (Rib-1-P) to deoxy-ribose 5-phosphate (dRib-5-P) and ribose 5-phosphate (Rib-5-P), respectively. This is Phosphopentomutase from Symbiobacterium thermophilum (strain DSM 24528 / JCM 14929 / IAM 14863 / T).